A 424-amino-acid polypeptide reads, in one-letter code: Tyrosine--tRNA ligase (424 aa).

Y37 contacts L-tyrosine. The 'HIGH' region signature appears at 42–51 (PTADSLHLGH). An N6-acetyllysine modification is found at K144. The L-tyrosine site is built by Y175 and Q179. The 'KMSKS' region signature appears at 235-239 (KFGKT). Position 238 (K238) interacts with ATP. In terms of domain architecture, S4 RNA-binding spans 357–414 (ADLMQALVDSELQPSRGQARKTIASNAITINGEKQSDPEYFFKEEDRLFGRFTLLRRG).

This sequence belongs to the class-I aminoacyl-tRNA synthetase family. TyrS type 1 subfamily. In terms of assembly, homodimer.

Its subcellular location is the cytoplasm. It carries out the reaction tRNA(Tyr) + L-tyrosine + ATP = L-tyrosyl-tRNA(Tyr) + AMP + diphosphate + H(+). Its function is as follows. Catalyzes the attachment of tyrosine to tRNA(Tyr) in a two-step reaction: tyrosine is first activated by ATP to form Tyr-AMP and then transferred to the acceptor end of tRNA(Tyr). The chain is Tyrosine--tRNA ligase from Escherichia coli (strain K12 / DH10B).